A 496-amino-acid chain; its full sequence is MELVVKSVSPETLKTATLVVTVGESRVLAGAARTVDILSGGAVSLILKRGDLAGKVGQSLLLHNLPNIKAERVLLVGTGKEDELSDRQLKKIVGAALTCLKGLGGTDAAIALDDLSVKNRDTYGMARLLVEALADGEYVFDRFKTQKAEVRALKKITLLTDKVKAADVERASTHAQAIATGMALTRDLGNLPPNICHPTYLGEEAKALGKAHKNLKVEVHDEKKLADLGMGSFLAVAQGSAQPPRLIVMNYQGGKKGDQPFVLVGKGITFDTGGISIKPASGMDEMKFDMCGAASVFGTLRAVLELKLPINLVCILACAENMPSGTATRPGDIVTTMSGQTVEILNTDAEGRLVLCDALTYAERFKPQAVIDIATLTGACVVALGGHTSGLLGNNDALINQLLDAGKQADDRAWQLPLFDEYQEQLDSPFADIANIGGPKGGTITAACFLSRFTKAYHWAHLDIAGTAWLSGGKEKGATGRPVPLLTQYLLDRAGV.

Positions 266 and 271 each coordinate Mn(2+). Lysine 278 is an active-site residue. 3 residues coordinate Mn(2+): aspartate 289, aspartate 348, and glutamate 350. Arginine 352 is a catalytic residue.

It belongs to the peptidase M17 family. It depends on Mn(2+) as a cofactor.

It localises to the cytoplasm. The enzyme catalyses Release of an N-terminal amino acid, Xaa-|-Yaa-, in which Xaa is preferably Leu, but may be other amino acids including Pro although not Arg or Lys, and Yaa may be Pro. Amino acid amides and methyl esters are also readily hydrolyzed, but rates on arylamides are exceedingly low.. The catalysed reaction is Release of an N-terminal amino acid, preferentially leucine, but not glutamic or aspartic acids.. Functionally, presumably involved in the processing and regular turnover of intracellular proteins. Catalyzes the removal of unsubstituted N-terminal amino acids from various peptides. The sequence is that of Probable cytosol aminopeptidase from Pseudomonas syringae pv. syringae (strain B728a).